Here is a 199-residue protein sequence, read N- to C-terminus: Melanocortin-2 receptor accessory protein 2B (199 aa).

N-linked (GlcNAc...) asparagine glycosylation is present at asparagine 6. Residues 39–59 (IVIGFWVGLAVFVIFMFFVLT) traverse the membrane as a helical segment.

The protein belongs to the MRAP family. In terms of assembly, interacts with mc4r. Expressed in adult brain.

The protein localises to the cell membrane. The protein resides in the endoplasmic reticulum membrane. In terms of biological role, activator of melanocortin receptor 4 (mc4r), a receptor involved in energy homeostasis. Plays a role after larval development in the control of energy homeostasis and body weight regulation by increasing ligand-sensitivity of mc4r and mc4r-mediated generation of cAMP once the zebrafish begins feeding, increasing the capacity for regulated feeding and growth. This Danio rerio (Zebrafish) protein is Melanocortin-2 receptor accessory protein 2B (mrap2b).